The chain runs to 430 residues: MAASTGKLRTLFSAHSSLSARPSSALPALRLTILRSYATTTPPDSSISNPSNPSTTVKRPPTAFKDKLNAGPAFSDFVSGKKDEPLDPAEAYALKTALVGPAGRKKEITRLPSWLKTPIPDSSNYKRIKNDLRGLNLHTVCEEARCPNISDCWGGSSKSAATATIMLMGDTCTRGCRFCSVKTSNKPPPLDPHEPENTAEALSRWGLGYVVLTSVDRDDLADGGARHFAETVLKIKQKAPNILVECLTGDYAGDLEMVALVANSGLDVYAHNVETVEALTPFVRDRRATFQQSLRVLKAAKATKPELITKTSLMLGLGETEAQLWDTLRALRAIDVDVVTFGQYMRPTKRHMAVHEYVRPDVFDMWKERALEMGFLYCASGPLVRSSYKAGEAFIENVLKKKRGKNVGSASGKGTTSENVEKLVAGEAVR.

A mitochondrion-targeting transit peptide spans 1 to 37 (MAASTGKLRTLFSAHSSLSARPSSALPALRLTILRSY). A compositionally biased stretch (low complexity) spans 40–56 (TTPPDSSISNPSNPSTT). The interval 40-64 (TTPPDSSISNPSNPSTTVKRPPTAF) is disordered. [4Fe-4S] cluster contacts are provided by C141, C146, C152, C172, C176, C179, and S387. Positions 155–376 (GSSKSAATAT…KERALEMGFL (222 aa)) constitute a Radical SAM core domain.

Belongs to the radical SAM superfamily. Lipoyl synthase family. The cofactor is [4Fe-4S] cluster.

It is found in the mitochondrion. The enzyme catalyses [[Fe-S] cluster scaffold protein carrying a second [4Fe-4S](2+) cluster] + N(6)-octanoyl-L-lysyl-[protein] + 2 oxidized [2Fe-2S]-[ferredoxin] + 2 S-adenosyl-L-methionine + 4 H(+) = [[Fe-S] cluster scaffold protein] + N(6)-[(R)-dihydrolipoyl]-L-lysyl-[protein] + 4 Fe(3+) + 2 hydrogen sulfide + 2 5'-deoxyadenosine + 2 L-methionine + 2 reduced [2Fe-2S]-[ferredoxin]. It participates in protein modification; protein lipoylation via endogenous pathway; protein N(6)-(lipoyl)lysine from octanoyl-[acyl-carrier-protein]: step 2/2. Catalyzes the radical-mediated insertion of two sulfur atoms into the C-6 and C-8 positions of the octanoyl moiety bound to the lipoyl domains of lipoate-dependent enzymes, thereby converting the octanoylated domains into lipoylated derivatives. This Blastomyces gilchristii (strain SLH14081) (Blastomyces dermatitidis) protein is Lipoyl synthase, mitochondrial.